The following is a 1182-amino-acid chain: Exocyst complex component 4 (1182 aa).

The segment covering 236–250 has biased composition (low complexity); the sequence is NKNSNSNNSNNTFKS. Disordered regions lie at residues 236–262, 376–427, 525–545, and 921–968; these read NKNS…PFKP, IPKM…SSNI, EETE…PKPT, and QQQQ…GSNN. Positions 392 to 409 are enriched in gly residues; that stretch reads GSNGGGNNSMNGSGGING. Residues 410 to 426 show a composition bias toward low complexity; sequence NGSTASSSSPTSSTSSN. The segment covering 921 to 932 has biased composition (low complexity); that stretch reads QQQQQQQQQQQQ. Polar residues predominate over residues 933 to 968; it reads VDSIKTPSKLNSGINSGGNSTASNKENNSTTTGSNN.

It belongs to the SEC8 family. The exocyst complex is composed of sec3/exoc1, sec5/exoc2, sec6/exoc3, sec8/exoc4, sec10/exoc5, sec15/exoc6, exo70/exoc7 and exo84/exoc8.

It localises to the midbody. Its subcellular location is the midbody ring. It is found in the cell projection. The protein localises to the cytoplasm. The protein resides in the cytoskeleton. It localises to the microtubule organizing center. Its subcellular location is the centrosome. In terms of biological role, component of the exocyst complex involved in the docking of exocytic vesicles with fusion sites on the plasma membrane. This chain is Exocyst complex component 4 (exoc4), found in Dictyostelium discoideum (Social amoeba).